The chain runs to 177 residues: Alkyl hydroperoxide reductase AhpD (177 aa).

Residue C130 is the Proton donor of the active site. The cysteines at positions 130 and 133 are disulfide-linked. The Cysteine sulfenic acid (-SOH) intermediate role is filled by C133.

Belongs to the AhpD family. Homotrimer.

The enzyme catalyses N(6)-[(R)-dihydrolipoyl]-L-lysyl-[lipoyl-carrier protein] + a hydroperoxide = N(6)-[(R)-lipoyl]-L-lysyl-[lipoyl-carrier protein] + an alcohol + H2O. Its function is as follows. Antioxidant protein with alkyl hydroperoxidase activity. Required for the reduction of the AhpC active site cysteine residues and for the regeneration of the AhpC enzyme activity. The protein is Alkyl hydroperoxide reductase AhpD of Corynebacterium aurimucosum (strain ATCC 700975 / DSM 44827 / CIP 107346 / CN-1) (Corynebacterium nigricans).